Reading from the N-terminus, the 323-residue chain is SPbeta prophage-derived uncharacterized protein YorG (323 aa).

Residues 222–272 (TAENLEKAIIEAVERQEQAEGIVAVTYEEQKQNNASEELDFNSLMDQIKEI) are a coiled coil.

The polypeptide is SPbeta prophage-derived uncharacterized protein YorG (yorG) (Bacillus subtilis (strain 168)).